Here is a 536-residue protein sequence, read N- to C-terminus: Phosphoenolpyruvate carboxykinase (ATP) (536 aa).

Substrate is bound by residues R61, Y195, and K201. ATP contacts are provided by residues K201, H220, and 236-244 (GLSGTGKTT). Residues K201 and H220 each coordinate Mn(2+). Residue D257 participates in Mn(2+) binding. The ATP site is built by E285, R322, and T447. Substrate is bound at residue R322.

This sequence belongs to the phosphoenolpyruvate carboxykinase (ATP) family. The cofactor is Mn(2+).

The protein localises to the cytoplasm. It catalyses the reaction oxaloacetate + ATP = phosphoenolpyruvate + ADP + CO2. Its pathway is carbohydrate biosynthesis; gluconeogenesis. Functionally, involved in the gluconeogenesis. Catalyzes the conversion of oxaloacetate (OAA) to phosphoenolpyruvate (PEP) through direct phosphoryl transfer between the nucleoside triphosphate and OAA. This is Phosphoenolpyruvate carboxykinase (ATP) from Rhizobium etli (strain ATCC 51251 / DSM 11541 / JCM 21823 / NBRC 15573 / CFN 42).